Consider the following 156-residue polypeptide: ATP synthase subunit b (156 aa).

The chain crosses the membrane as a helical span at residues 5 to 25 (LTMIGQAIAFFIFVVFCMKYV).

Belongs to the ATPase B chain family. F-type ATPases have 2 components, F(1) - the catalytic core - and F(0) - the membrane proton channel. F(1) has five subunits: alpha(3), beta(3), gamma(1), delta(1), epsilon(1). F(0) has three main subunits: a(1), b(2) and c(10-14). The alpha and beta chains form an alternating ring which encloses part of the gamma chain. F(1) is attached to F(0) by a central stalk formed by the gamma and epsilon chains, while a peripheral stalk is formed by the delta and b chains.

The protein resides in the cell inner membrane. Its function is as follows. F(1)F(0) ATP synthase produces ATP from ADP in the presence of a proton or sodium gradient. F-type ATPases consist of two structural domains, F(1) containing the extramembraneous catalytic core and F(0) containing the membrane proton channel, linked together by a central stalk and a peripheral stalk. During catalysis, ATP synthesis in the catalytic domain of F(1) is coupled via a rotary mechanism of the central stalk subunits to proton translocation. In terms of biological role, component of the F(0) channel, it forms part of the peripheral stalk, linking F(1) to F(0). The polypeptide is ATP synthase subunit b (Hahella chejuensis (strain KCTC 2396)).